A 311-amino-acid chain; its full sequence is Olfactory receptor 6B1 (311 aa).

Topologically, residues 1 to 25 (MELENQTRVTKFILVGFPGSLSMRA) are extracellular. Asn5 carries an N-linked (GlcNAc...) asparagine glycan. Residues 26–46 (AMFLIFLVAYILTVAENVIII) form a helical membrane-spanning segment. The Cytoplasmic portion of the chain corresponds to 47–54 (LLVLQNRP). A helical transmembrane segment spans residues 55–75 (LHKPMYFFLANLSFLETWYIS). Topologically, residues 76-99 (VTVPKLLFSFWSVNNSISFTLCMI) are extracellular. Cys97 and Cys189 are oxidised to a cystine. Residues 100–120 (QLYFFIALMCTECVLLAAMAY) traverse the membrane as a helical segment. Residues 121–139 (DRYVAICRPLHYPTIMSHG) lie on the Cytoplasmic side of the membrane. Residues 140–160 (LCFRLALGSWAIGFGISLAKI) traverse the membrane as a helical segment. Topologically, residues 161 to 196 (YFISCLSFCGPNVINHFFCDISPVLNLSCTDMSITE) are extracellular. The chain crosses the membrane as a helical span at residues 197-217 (LVDFILALVIFLFPLFITVLS). The Cytoplasmic segment spans residues 218–235 (YGCILATILCMPTGKQKA). A helical transmembrane segment spans residues 236–256 (FSTCASHLVVVTIFYSAIIFM). Residues 257–269 (YARPRVIHAFNMN) are Extracellular-facing. A helical transmembrane segment spans residues 270–290 (KIISIFYAIVTPSLNPFIYCL). Residues 291 to 311 (RNREVKEALKKLAYCQASRSD) are Cytoplasmic-facing.

The protein belongs to the G-protein coupled receptor 1 family.

Its subcellular location is the cell membrane. Functionally, odorant receptor. In Homo sapiens (Human), this protein is Olfactory receptor 6B1 (OR6B1).